We begin with the raw amino-acid sequence, 218 residues long: Ohanin-like protein (218 aa).

An N-terminal signal peptide occupies residues 1 to 40 (MSPSAGFQFSLYFLQTKKVLWKLTGLCYILLFTLCFFADQ). Residues 41-48 (ENGGKALA) constitute a propeptide that is removed on maturation. Residues 49 to 155 (SPPGIWKRAD…RIWQTGLWWL (107 aa)) enclose the B30.2/SPRY domain. The propeptide occupies 156–218 (RHLETDPGRV…LGGTVSLTTL (63 aa)).

Belongs to the ohanin/vespryn family. As to expression, expressed by the venom gland.

It localises to the secreted. Neurotoxin that produces dose-dependent hypolocomotion and hyperalgesia in mice. May directly act on the central nervous system, as it is 6500-fold more potent when administered intracerebroventricularly than intraperitoneal. The protein is Ohanin-like protein of Lachesis muta muta (Bushmaster).